Consider the following 1701-residue polypeptide: DDB1- and CUL4-associated factor homolog 1 (1701 aa).

The segment covering 224–245 (HAEQSTSNGTSIPSIKITSVDG) has biased composition (polar residues). Disordered stretches follow at residues 224-269 (HAEQ…RRTE), 883-906 (DRPA…GNNF), and 932-961 (RPSN…TPTL). The 33-residue stretch at 851–883 (NQAELLQLIHDHLLKSKLDSVAAMLKSEAKLPD) folds into the LisH domain. Residues 888-906 (RSINTPILNKPLPSSGNNF) show a composition bias toward polar residues. 4 WD repeats span residues 1086-1125 (DHDE…DEGH), 1128-1169 (CHGS…QRVH), 1171-1210 (YRED…DTYL), and 1215-1252 (GLQY…HVFD). 2 short sequence motifs (DWD box) span residues 1237-1245 (LLWDVRKKN) and 1275-1282 (EVYDIRTF). Disordered regions lie at residues 1384 to 1559 (IGRL…DINL), 1566 to 1585 (EARV…PVDP), and 1641 to 1701 (LVRG…DDEA). Acidic residues-rich tracts occupy residues 1390 to 1423 (NEDE…DEEI) and 1451 to 1461 (DDNDTLDDLDF). The span at 1468–1479 (IIRRQAQRRRQR) shows a compositional bias: basic residues. 2 stretches are compositionally biased toward acidic residues: residues 1494 to 1512 (EGSD…DPDF) and 1520 to 1543 (DLVD…DDDS). Over residues 1567-1581 (ARVVENEGNNERPAR) the composition is skewed to basic and acidic residues. The span at 1667 to 1678 (DTDEYQSEEEEI) shows a compositional bias: acidic residues.

The protein belongs to the VPRBP/DCAF1 family. In terms of assembly, component of the cul4-rbx1-ddb1-dcaf1 E3 ubiquitin-protein ligase complex.

Its subcellular location is the nucleus. Its pathway is protein modification; protein ubiquitination. In terms of biological role, component of the cul4-rbx1-ddb1-dcaf1 E3 ubiquitin-protein ligase complex, dcaf1 may function as the substrate recognition module within this complex. This Caenorhabditis elegans protein is DDB1- and CUL4-associated factor homolog 1 (dcaf-1).